A 59-amino-acid polypeptide reads, in one-letter code: UPF0339 protein CC_2965 (59 aa).

Belongs to the UPF0339 family.

This chain is UPF0339 protein CC_2965, found in Caulobacter vibrioides (strain ATCC 19089 / CIP 103742 / CB 15) (Caulobacter crescentus).